The sequence spans 452 residues: Probable glycine dehydrogenase (decarboxylating) subunit 1 (452 aa).

This sequence belongs to the GcvP family. N-terminal subunit subfamily. As to quaternary structure, the glycine cleavage system is composed of four proteins: P, T, L and H. In this organism, the P 'protein' is a heterodimer of two subunits.

The enzyme catalyses N(6)-[(R)-lipoyl]-L-lysyl-[glycine-cleavage complex H protein] + glycine + H(+) = N(6)-[(R)-S(8)-aminomethyldihydrolipoyl]-L-lysyl-[glycine-cleavage complex H protein] + CO2. Its function is as follows. The glycine cleavage system catalyzes the degradation of glycine. The P protein binds the alpha-amino group of glycine through its pyridoxal phosphate cofactor; CO(2) is released and the remaining methylamine moiety is then transferred to the lipoamide cofactor of the H protein. The polypeptide is Probable glycine dehydrogenase (decarboxylating) subunit 1 (Sphingopyxis alaskensis (strain DSM 13593 / LMG 18877 / RB2256) (Sphingomonas alaskensis)).